The sequence spans 1034 residues: Potassium-transporting ATPase alpha chain 1 (1034 aa).

The Cytoplasmic segment spans residues 1–97; the sequence is MGKAENYELY…NALRPPRGTP (97 aa). Phosphotyrosine is present on residues Tyr-7 and Tyr-10. The segment at 14–41 is disordered; sequence LGSGPGGDMTAKMSKKKAGGGGGKKKEK. Basic residues predominate over residues 26–39; the sequence is MSKKKAGGGGGKKK. Residue Ser-27 is modified to Phosphoserine. Residues 98–118 form a helical membrane-spanning segment; the sequence is EYVKFARQLAGGLQCLMWVAA. Over 119–141 the chain is Lumenal; that stretch reads AICLIAFAIQASEGDLTTDDNLY. The helical transmembrane segment at 142 to 162 threads the bilayer; sequence LAVALIAVVVVTGCFGYYQEF. Topologically, residues 163–298 are cytoplasmic; it reads KSTNIIASFK…NEKTPIAIEI (136 aa). The helical transmembrane segment at 299 to 318 threads the bilayer; the sequence is EHFVDIIAGLAILFGATFFV. Residues 319 to 330 are Lumenal-facing; sequence VAMCIGYTFLRA. Residues 331-348 traverse the membrane as a helical segment; the sequence is MVFFMAIVVAYVPEGLLA. Residues Val-339, Ala-340, Val-342, and Glu-344 each coordinate K(+). Topologically, residues 349-782 are cytoplasmic; it reads TVTVCLSLTA…EQGRLIFDNL (434 aa). Asp-386 acts as the 4-aspartylphosphate intermediate in catalysis. Positions 386 and 388 each coordinate Mg(2+). A phosphoserine mark is found at Ser-462 and Ser-600. Mg(2+)-binding residues include Asp-727 and Asp-731. Residues 783 to 802 traverse the membrane as a helical segment; sequence KKSIAYTLTKNIPELTPYLI. Glu-796 contacts K(+). The Lumenal segment spans residues 803–812; that stretch reads YITVSVPLPL. Residues 813–833 traverse the membrane as a helical segment; it reads GCITILFIELCTDIFPSVSLA. Glu-821 provides a ligand contact to K(+). Topologically, residues 834 to 853 are cytoplasmic; that stretch reads YEKAESDIMHLRPRNPKRDR. Ser-839 bears the Phosphoserine mark. Residues 854–876 traverse the membrane as a helical segment; it reads LVNEPLAAYSYFQIGAIQSFAGF. Over 877 to 928 the chain is Lumenal; that stretch reads ADYFTAMAQEGWFPLLCVGLRPQWEDHHLQDLQDSYGQEWTFGQRLYQQYTC. Residues 929-948 traverse the membrane as a helical segment; it reads YTVFFISIEMCQIADVLIRK. Residues 949–962 are Cytoplasmic-facing; it reads TRRLSVFQQGFFRN. The residue at position 953 (Ser-953) is a Phosphoserine; by PKA. A helical membrane pass occupies residues 963–981; sequence KILVIAIVFQVCIGCFLCY. Residues 982–996 lie on the Lumenal side of the membrane; the sequence is CPGMPNIFNFMPIRF. Residues 997–1017 form a helical membrane-spanning segment; it reads QWWLVPMPFGLLIFVYDEIRK. Topologically, residues 1018–1034 are cytoplasmic; that stretch reads LGVRCCPGSWWDQELYY.

Belongs to the cation transport ATPase (P-type) (TC 3.A.3) family. Type IIC subfamily. As to quaternary structure, the gastric H(+)/K(+) ATPase pump is composed of the catalytic alpha subunit ATP4A and the regulatory beta subunit ATP4B. Interacts (via the P-domain) with ATP4B (via N-terminus); this interaction stabilizes the lumenal-open E2 conformation state and prevents the reverse reaction of the transport cycle. As to expression, expressed in parietal cells (at protein level).

Its subcellular location is the apical cell membrane. It carries out the reaction K(+)(out) + ATP + H2O + H(+)(in) = K(+)(in) + ADP + phosphate + 2 H(+)(out). Functionally, the catalytic subunit of the gastric H(+)/K(+) ATPase pump which transports H(+) ions in exchange for K(+) ions across the apical membrane of parietal cells. Uses ATP as an energy source to pump H(+) ions to the gastric lumen while transporting K(+) ion from the lumen into the cell. Remarkably generates a million-fold proton gradient across the gastric parietal cell membrane, acidifying the gastric juice down to pH 1. Within a transport cycle, the transfer of a H(+) ion across the membrane is coupled to ATP hydrolysis and is associated with a transient phosphorylation that shifts the pump conformation from inward-facing (E1) to outward-facing state (E2). The release of the H(+) ion in the stomach lumen is followed by binding of K(+) ion converting the pump conformation back to the E1 state. The chain is Potassium-transporting ATPase alpha chain 1 from Mus musculus (Mouse).